The chain runs to 468 residues: Soluble pyridine nucleotide transhydrogenase (468 aa).

38–47 (ERHYNVGGGC) serves as a coordination point for FAD.

The protein belongs to the class-I pyridine nucleotide-disulfide oxidoreductase family. FAD is required as a cofactor.

The protein localises to the cytoplasm. The catalysed reaction is NAD(+) + NADPH = NADH + NADP(+). In terms of biological role, conversion of NADPH, generated by peripheral catabolic pathways, to NADH, which can enter the respiratory chain for energy generation. The chain is Soluble pyridine nucleotide transhydrogenase from Pectobacterium atrosepticum (strain SCRI 1043 / ATCC BAA-672) (Erwinia carotovora subsp. atroseptica).